Here is a 620-residue protein sequence, read N- to C-terminus: MDSHTLIQALIYLGSAALIVPIAVRLGLGSVLGYLIAGCIIGPWGLRLVTDAESILHFAEIGVVLMLFIIGLELDPQRLWKLRAAVFGGGALQMVICGGLLGLFCMFLGLRWQVAELIGMTLALSSTAIAMQAMNERNLMVTQMGRSAFAVLLFQDIAAIPLVAMIPLLAASSASTTMGAFALSALKVAGALVLVVLLGRYVTRPALRFVARSGLREVFSAVALFLVFGFGLLLEEVGLSMAMGAFLAGVLLASSEYRHALESDIEPFKGLLLGLFFIGVGMSIDFGTLLENPLRIVILLLGFLIIKIAMLWLIARPLQVPNKQRRWFAVLLGQGSEFAFVVFGAAQMANVLEPEWAKSLTLAVALSMAATPILLVILNRLEQSSTEQAREADEIDEEQPRVIIAGFGRYGQITGRLLLSSGVKMVVLDHDPDHIETLRKFGMKVFYGDATRMDLLESAGAAKAEVLINAIDDPQTNLQLTEMVKEHFPHLQIIARARDVDHYIRLRQAGVEKPERETFEGALKTGRLALESLGLGPYEARERADVFRRFNIQMVEEMAVVENDTKARAAVYKRTSAMLSEIITEDREHLSLIQRHGWQGTEEGKHTGNMADEPETKPSS.

12 consecutive transmembrane segments (helical) span residues 4 to 24 (HTLI…PIAV), 26 to 46 (LGLG…PWGL), 54 to 74 (SILH…GLEL), 90 to 110 (GALQ…FLGL), 114 to 134 (VAEL…MQAM), 149 to 169 (FAVL…IPLL), 178 to 198 (MGAF…VVLL), 218 to 238 (VFSA…EEVG), 270 to 290 (GLLL…GTLL), 294 to 314 (LRIV…LWLI), 327 to 347 (WFAV…GAAQ), and 359 to 379 (SLTL…VILN). The RCK N-terminal domain maps to 399–518 (QPRVIIAGFG…AGVEKPERET (120 aa)). Residues 597-620 (GWQGTEEGKHTGNMADEPETKPSS) are disordered.

The protein belongs to the monovalent cation:proton antiporter 2 (CPA2) transporter (TC 2.A.37) family. KefC subfamily. Homodimer. Interacts with the regulatory subunit KefF.

It is found in the cell inner membrane. Its function is as follows. Pore-forming subunit of a potassium efflux system that confers protection against electrophiles. Catalyzes K(+)/H(+) antiport. The polypeptide is Glutathione-regulated potassium-efflux system protein KefC (Escherichia fergusonii (strain ATCC 35469 / DSM 13698 / CCUG 18766 / IAM 14443 / JCM 21226 / LMG 7866 / NBRC 102419 / NCTC 12128 / CDC 0568-73)).